Consider the following 178-residue polypeptide: Adenine phosphoribosyltransferase (178 aa).

Belongs to the purine/pyrimidine phosphoribosyltransferase family. Homodimer.

The protein resides in the cytoplasm. The enzyme catalyses AMP + diphosphate = 5-phospho-alpha-D-ribose 1-diphosphate + adenine. Its pathway is purine metabolism; AMP biosynthesis via salvage pathway; AMP from adenine: step 1/1. In terms of biological role, catalyzes a salvage reaction resulting in the formation of AMP, that is energically less costly than de novo synthesis. This is Adenine phosphoribosyltransferase from Mycoplasmoides gallisepticum (strain R(low / passage 15 / clone 2)) (Mycoplasma gallisepticum).